We begin with the raw amino-acid sequence, 430 residues long: Spermatogenic leucine zipper protein 1 (430 aa).

A disordered region spans residues 1–25 (MASSAKSAEMPTISKTVNPTPDPHQ). Residues 62–102 (EQQTAQKFNNLLKEIKDILKNMAGFEEKITEAKELFEETNI) are a coiled coil. S107 carries the phosphoserine modification. Positions 166 to 177 (KINEMLSTNLPV) are helix-loop-helix motif. The tract at residues 178–244 (SLAPEKEDNE…NVQEETMKIR (67 aa)) is basic motif. Coiled-coil stretches lie at residues 214–269 (LEEK…KLIK) and 316–351 (SLQL…TLQE). Phosphoserine is present on S258. The interval 303–324 (LEEQVKKLSHDTYSLQLMAALL) is leucine-zipper.

As to quaternary structure, interacts with PPP1CC isoform gamma-2. In terms of processing, phosphorylated by MAPK1/ERK2 and MAPK3/ERK1. Specifically and strongly expressed in the testis. Expressed in several tumor cell lines.

The protein localises to the cytoplasm. It localises to the nucleus. In terms of biological role, transcription factor that binds to the DNA sequence 5'-CANNTG-3'(E box) and the G-box motif. May play an important role in the regulation of cell proliferation and differentiation during spermatogenesis. This Homo sapiens (Human) protein is Spermatogenic leucine zipper protein 1 (SPZ1).